A 1463-amino-acid polypeptide reads, in one-letter code: MFSFVDLRLLLLLAATALLTHGQEEGQEEGQEEDIPPVTCVQNGLRYHDRDVWKPVPCQICVCDNGNVLCDDVICDELKDCPNAKVPTDECCPVCPEGQESPTDQETTGVEGPKGDTGPRGPRGPAGPPGRDGIPGQPGLPGPPGPPGPPGPPGLGGNFAPQLSYGYDEKSTGISVPGPMGPSGPRGLPGPPGAPGPQGFQGPPGEPGEPGASGPMGPRGPPGPPGKNGDDGEAGKPGRPGERGPPGPQGARGLPGTAGLPGMKGHRGFSGLDGAKGDAGPAGPKGEPGSPGENGAPGQMGPRGLPGERGRPGAPGPAGARGNDGATGAAGPPGPTGPAGPPGFPGAVGAKGEGGPQGPRGSEGPQGVRGEPGPPGPAGAAGPAGNPGADGQPGAKGANGAPGIAGAPGFPGARGPSGPQGPSGPPGPKGNSGEPGAPGSKGDTGAKGEPGPTGIQGPPGPAGEEGKRGARGEPGPAGLPGPPGERGGPGSRGFPGADGVAGPKGPAGERGAPGPAGPKGSPGEAGRPGEAGLPGAKGLTGSPGSPGPDGKTGPPGPAGQDGRPGPPGPPGARGQAGVMGFPGPKGAAGEPGKAGERGVPGPPGAVGPAGKDGEAGAQGPPGPAGPAGERGEQGPAGSPGFQGLPGPAGPPGEAGKPGEQGVPGDLGAPGPSGARGERGFPGERGVQGPPGPAGPRGANGAPGNDGAKGDAGAPGAPGSQGAPGLQGMPGERGAAGLPGPKGDRGDAGPKGADGAPGKDGVRGLTGPIGPPGPAGAPGDKGEAGPSGPAGPTGARGAPGDRGEPGPPGPAGFAGPPGADGQPGAKGEPGDAGAKGDAGPPGPAGPAGPPGPIGNVGAPGPKGARGSAGPPGATGFPGAAGRVGPPGPSGNAGPPGPPGPAGKEGSKGPRGETGPAGRPGEVGPPGPPGPAGEKGAPGADGPAGAPGTPGPQGIAGQRGVVGLPGQRGERGFPGLPGPSGEPGKQGPSGASGERGPPGPMGPPGLAGPPGESGREGAPGAEGSPGRDGSPGAKGDRGETGPAGPPGAPGAPGAPGPVGPAGKSGDRGETGPAGPAGPIGPVGARGPAGPQGPRGDKGETGEQGDRGIKGHRGFSGLQGPPGPPGSPGEQGPSGASGPAGPRGPPGSAGSPGKDGLNGLPGPIGPPGPRGRTGDAGPAGPPGPPGPPGPPGPPSGGYDLSFLPQPPQEKAHDGGRYYRADDANVVRDRDLEVDTTLKSLSQQIENIRSPEGSRKNPARTCRDLKMCHSDWKSGEYWIDPNQGCNLDAIKVFCNMETGETCVYPTQPSVAQKNWYISKNPKEKRHVWYGESMTGGFQFEYGGQGSDPADVAIQLTFLRLMSTEASQNITYHCKNSVAYMDQQTGNLKKALLLQGSNEIEIRAEGNSRFTYSVTYDGCTSHTGAWGKTVIEYKTTKTSRLPIIDVAPLDVGAPDQEFGFDVGPACFL.

The N-terminal stretch at 1 to 22 (MFSFVDLRLLLLLAATALLTHG) is a signal peptide. Positions 23-161 (QEEGQEEGQE…PPGLGGNFAP (139 aa)) are cleaved as a propeptide — N-terminal propeptide. Residues 38–96 (VTCVQNGLRYHDRDVWKPVPCQICVCDNGNVLCDDVICDELKDCPNAKVPTDECCPVCP) enclose the VWFC domain. The interval 98–1217 (GQESPTDQET…AHDGGRYYRA (1120 aa)) is disordered. Positions 138 to 153 (PGLPGPPGPPGPPGPP) are enriched in pro residues. Glutamine 162 bears the Pyrrolidone carboxylic acid mark. Residues 162-177 (QLSYGYDEKSTGISVP) are nonhelical region (N-terminal). Residue lysine 170 is modified to Allysine. Serine 171 is subject to Phosphoserine. The interval 178–1191 (GPMGPSGPRG…PGPPGPPGPP (1014 aa)) is triple-helical region. Proline 189, proline 192, proline 195, proline 204, proline 207, proline 210, proline 225, proline 240, proline 246, proline 255, and proline 261 each carry 4-hydroxyproline. Over residues 197-216 (PQGFQGPPGEPGEPGASGPM) the composition is skewed to low complexity. Positions 228–242 (NGDDGEAGKPGRPGE) are enriched in basic and acidic residues. Lysine 264 carries the post-translational modification 5-hydroxylysine; alternate. A glycan (O-linked (Gal...) hydroxylysine; alternate) is linked at lysine 264. Serine 270 bears the Phosphoserine mark. A 5-hydroxylysine mark is found at lysine 276 and lysine 285. Positions 278–294 (DAGPAGPKGEPGSPGEN) are enriched in low complexity. 5 positions are modified to 4-hydroxyproline: proline 288, proline 291, proline 297, proline 306, and proline 312. Residues 317-330 (PAGARGNDGATGAA) are compositionally biased toward low complexity. Positions 332 to 344 (PPGPTGPAGPPGF) are enriched in pro residues. 3 positions are modified to 4-hydroxyproline: proline 333, proline 342, and proline 345. A compositionally biased stretch (gly residues) spans 349–358 (GAKGEGGPQG). A 4-hydroxyproline mark is found at proline 372, proline 375, proline 387, proline 393, proline 402, proline 408, proline 411, and proline 426. Over residues 378–417 (AGAAGPAGNPGADGQPGAKGANGAPGIAGAPGFPGARGPS) the composition is skewed to low complexity. Residue lysine 429 is modified to 5-hydroxylysine. Residues proline 435, proline 438, proline 450, proline 459, proline 474, proline 480, proline 489, and proline 495 each carry the 4-hydroxyproline modification. The span at 484–493 (GERGGPGSRG) shows a compositional bias: gly residues. Residues 494–525 (FPGADGVAGPKGPAGERGAPGPAGPKGSPGEA) are compositionally biased toward low complexity. Lysine 504 carries the post-translational modification 5-hydroxylysine. 4-hydroxyproline is present on residues proline 513, proline 522, proline 528, proline 534, proline 543, proline 546, proline 555, proline 564, proline 570, proline 582, proline 591, proline 600, proline 603, proline 621, proline 639, proline 645, proline 651, proline 657, proline 663, proline 669, proline 681, proline 690, proline 702, proline 714, proline 717, proline 723, proline 729, and proline 738. Residues 537–563 (KGLTGSPGSPGPDGKTGPPGPAGQDGR) show a composition bias toward low complexity. The segment covering 572–591 (ARGQAGVMGFPGPKGAAGEP) has biased composition (low complexity). Over residues 633–660 (QGPAGSPGFQGLPGPAGPPGEAGKPGEQ) the composition is skewed to low complexity. Residues 695–723 (PRGANGAPGNDGAKGDAGAPGAPGSQGAP) are compositionally biased toward low complexity. The Cell attachment site motif lies at 744-746 (RGD). A 5-hydroxylysine modification is found at lysine 750. 3 positions are modified to 4-hydroxyproline: proline 756, proline 771, and proline 777. Low complexity predominate over residues 783 to 797 (AGPSGPAGPTGARGA). Serine 786 carries the phosphoserine modification. A 4-hydroxyproline mark is found at proline 798, proline 804, proline 807, proline 816, proline 822, proline 840, proline 849, and proline 858. A compositionally biased stretch (low complexity) spans 810 to 837 (AGFAGPPGADGQPGAKGEPGDAGAKGDA). Positions 839–851 (PPGPAGPAGPPGP) are enriched in pro residues. Over residues 852–882 (IGNVGAPGPKGARGSAGPPGATGFPGAAGRV) the composition is skewed to low complexity. Position 861 is a 5-hydroxylysine (lysine 861). 2 positions are modified to 4-hydroxyproline: proline 870 and proline 876. At proline 884 the chain carries 3-hydroxyproline. Proline 885, proline 894, proline 897, proline 918, proline 927, proline 936, proline 945, proline 963, proline 972, proline 975, proline 981, proline 996, proline 1002, proline 1008, proline 1017, and proline 1023 each carry 4-hydroxyproline. Over residues 930–954 (AGEKGAPGADGPAGAPGTPGPQGIA) the composition is skewed to low complexity. Pro residues predominate over residues 995-1005 (PPGPMGPPGLA). Lysine 1032 carries the 5-hydroxylysine modification. The span at 1041-1056 (AGPPGAPGAPGAPGPV) shows a compositional bias: pro residues. A 4-hydroxyproline mark is found at proline 1044, proline 1047, and proline 1050. A compositionally biased stretch (low complexity) spans 1077-1091 (IGPVGARGPAGPQGP). Residues 1092–1094 (RGD) carry the Cell attachment site motif. The segment covering 1092 to 1106 (RGDKGETGEQGDRGI) has biased composition (basic and acidic residues). Lysine 1095 is modified (5-hydroxylysine). At lysine 1107 the chain carries 5-hydroxylysine; alternate. An O-linked (Gal...) hydroxylysine; alternate glycan is attached at lysine 1107. A 4-hydroxyproline mark is found at proline 1119, proline 1122, proline 1125, proline 1143, and proline 1158. Positions 1125 to 1149 (PGEQGPSGASGPAGPRGPPGSAGSP) are enriched in low complexity. Proline 1163 carries the 3-hydroxyproline modification. Proline 1164 bears the 4-hydroxyproline mark. A compositionally biased stretch (pro residues) spans 1176–1191 (AGPPGPPGPPGPPGPP). The residue at position 1178 (proline 1178) is a 3-hydroxyproline. At proline 1179 the chain carries 4-hydroxyproline. At proline 1181 the chain carries 3-hydroxyproline. The residue at position 1182 (proline 1182) is a 4-hydroxyproline. Proline 1184 carries the 3-hydroxyproline modification. Proline 1185, proline 1188, and proline 1191 each carry 4-hydroxyproline. The interval 1192–1215 (SGGYDLSFLPQPPQEKAHDGGRYY) is nonhelical region (C-terminal). The span at 1206 to 1217 (EKAHDGGRYYRA) shows a compositional bias: basic and acidic residues. At lysine 1207 the chain carries Allysine. Residues 1218–1463 (DDANVVRDRD…GFDVGPACFL (246 aa)) constitute a propeptide, C-terminal propeptide. In terms of domain architecture, Fibrillar collagen NC1 spans 1228-1463 (LEVDTTLKSL…GFDVGPACFL (236 aa)). Cystine bridges form between cysteine 1258–cysteine 1290, cysteine 1298–cysteine 1461, and cysteine 1369–cysteine 1414. Ca(2+) is bound by residues aspartate 1276, asparagine 1278, glutamine 1279, cysteine 1281, and aspartate 1284.

It belongs to the fibrillar collagen family. In terms of assembly, trimers of one alpha 2(I) and two alpha 1(I) chains. Interacts with MRC2. Interacts with TRAM2. Interacts with MFAP4 in a Ca (2+)-dependent manner. Contains mostly 4-hydroxyproline. Proline residues at the third position of the tripeptide repeating unit (G-X-Y) are hydroxylated in some or all of the chains. Post-translationally, contains 3-hydroxyproline at a few sites. This modification occurs on the first proline residue in the sequence motif Gly-Pro-Hyp, where Hyp is 4-hydroxyproline. In terms of processing, lysine residues at the third position of the tripeptide repeating unit (G-X-Y) are 5-hydroxylated in some or all of the chains. O-glycosylated on hydroxylated lysine residues. The O-linked glycan consists of a Glc-Gal disaccharide. Forms the fibrils of tendon, ligaments and bones. In bones the fibrils are mineralized with calcium hydroxyapatite.

Its subcellular location is the secreted. It localises to the extracellular space. It is found in the extracellular matrix. Functionally, type I collagen is a member of group I collagen (fibrillar forming collagen). This Bos taurus (Bovine) protein is Collagen alpha-1(I) chain (COL1A1).